The primary structure comprises 230 residues: Modulator of macroautophagy TMEM150B (230 aa).

Met1 is a topological domain (cytoplasmic). The helical transmembrane segment at 2 to 22 threads the bilayer; that stretch reads WAWALLPICLTIWATAGIWIV. The Extracellular segment spans residues 23–50; sequence YGMSVSNGSVNLTDGFPFISLCGTYPPQ. N-linked (GlcNAc...) asparagine glycans are attached at residues Asn29 and Asn33. A helical membrane pass occupies residues 51–71; that stretch reads SCVFGQVLNVGAMLGVWISVI. At 72-83 the chain is on the cytoplasmic side; it reads RFQQIRDYGCHS. A helical transmembrane segment spans residues 84–104; sequence VLNSVSLAMGLLCALGTSIVG. The Extracellular segment spans residues 105-115; that stretch reads NFQQSNQLETH. A helical membrane pass occupies residues 116–136; the sequence is LAGAFLAFVIGNIYFWMQTVL. Over 137 to 150 the chain is Cytoplasmic; that stretch reads TYMVKPKHGGCYIG. Residues 151-171 traverse the membrane as a helical segment; that stretch reads PIRFCLSVACTALIVLMAVFL. Residues 172–183 lie on the Extracellular side of the membrane; it reads KLNMKSISAICE. A helical transmembrane segment spans residues 184–204; that stretch reads WIVAMILFLLYGLFSVDFWHL. Topologically, residues 205 to 230 are cytoplasmic; the sequence is DGHYFHVKKRTAIPNEVEVSTVTLNI.

Belongs to the DRAM/TMEM150 family.

It localises to the cell membrane. The protein localises to the endosome membrane. The protein resides in the cytoplasmic vesicle. Its subcellular location is the autophagosome membrane. Its function is as follows. Modulator of macroautophagy that causes accumulation of autophagosomes under basal conditions and enhances autophagic flux. Represses cell death and promotes long-term clonogenic survival of cells grown in the absence of glucose in a macroautophagy-independent manner. May have some role in extracellular matrix engulfment or growth factor receptor recycling, both of which can modulate cell survival. The protein is Modulator of macroautophagy TMEM150B of Xenopus tropicalis (Western clawed frog).